The sequence spans 257 residues: Glutamate racemase (257 aa).

Residues 12–13 and 44–45 contribute to the substrate site; these read DS and YG. The Proton donor/acceptor role is filled by C75. 76 to 77 provides a ligand contact to substrate; the sequence is NT. C176 serves as the catalytic Proton donor/acceptor. 177–178 is a binding site for substrate; that stretch reads TH.

The protein belongs to the aspartate/glutamate racemases family.

The catalysed reaction is L-glutamate = D-glutamate. It participates in cell wall biogenesis; peptidoglycan biosynthesis. Its function is as follows. Provides the (R)-glutamate required for cell wall biosynthesis. This is Glutamate racemase from Thermus thermophilus (strain ATCC 27634 / DSM 579 / HB8).